Here is a 241-residue protein sequence, read N- to C-terminus: Golgi-associated RAB2 interactor protein 6 (241 aa).

It belongs to the GARIN family.

This Homo sapiens (Human) protein is Golgi-associated RAB2 interactor protein 6.